Consider the following 425-residue polypeptide: Kynureninase (425 aa).

Pyridoxal 5'-phosphate-binding positions include L105, T106, 133 to 136 (FPSD), D218, H221, and Y243. K244 carries the post-translational modification N6-(pyridoxal phosphate)lysine. Pyridoxal 5'-phosphate-binding residues include W274 and N302.

Belongs to the kynureninase family. Homodimer. It depends on pyridoxal 5'-phosphate as a cofactor.

It catalyses the reaction L-kynurenine + H2O = anthranilate + L-alanine + H(+). It carries out the reaction 3-hydroxy-L-kynurenine + H2O = 3-hydroxyanthranilate + L-alanine + H(+). It functions in the pathway amino-acid degradation; L-kynurenine degradation; L-alanine and anthranilate from L-kynurenine: step 1/1. Its pathway is cofactor biosynthesis; NAD(+) biosynthesis; quinolinate from L-kynurenine: step 2/3. In terms of biological role, catalyzes the cleavage of L-kynurenine (L-Kyn) and L-3-hydroxykynurenine (L-3OHKyn) into anthranilic acid (AA) and 3-hydroxyanthranilic acid (3-OHAA), respectively. The polypeptide is Kynureninase (Flavobacterium johnsoniae (strain ATCC 17061 / DSM 2064 / JCM 8514 / BCRC 14874 / CCUG 350202 / NBRC 14942 / NCIMB 11054 / UW101) (Cytophaga johnsonae)).